The following is a 566-amino-acid chain: Cytochrome c oxidase subunit 1 (566 aa).

7 helical membrane passes run 29–49 (IGVL…AFTV), 97–117 (VMIT…ALFG), 141–161 (LSYW…FAPG), 189–209 (LAIF…INMI), 227–247 (LFAW…PVLA), 278–298 (ILWF…FGIV), and 310–330 (IFGY…GFVV). Position 102 (histidine 102) interacts with Fe(II)-heme a. 2 residues coordinate Cu cation: histidine 284 and tyrosine 288. A cross-link (1'-histidyl-3'-tyrosine (His-Tyr)) is located at residues 284-288 (HPEVY). Histidine 333 and histidine 334 together coordinate Cu cation. A run of 2 helical transmembrane segments spans residues 348–368 (FMMA…SWIA) and 381–401 (MLWA…GIVL). Histidine 419 contacts heme a3. Helical transmembrane passes span 420-440 (FHYV…YFWI), 455-475 (LHFW…HFLG), and 499-519 (LGAF…FYTL). Histidine 421 serves as a coordination point for Fe(II)-heme a. A disordered region spans residues 543-566 (TSPPPEHTFEQLPKREDWERAPAH). The segment covering 549 to 566 (HTFEQLPKREDWERAPAH) has biased composition (basic and acidic residues).

This sequence belongs to the heme-copper respiratory oxidase family. Requires Cu(2+) as cofactor. Heme is required as a cofactor.

Its subcellular location is the cell membrane. It catalyses the reaction 4 Fe(II)-[cytochrome c] + O2 + 8 H(+)(in) = 4 Fe(III)-[cytochrome c] + 2 H2O + 4 H(+)(out). It functions in the pathway energy metabolism; oxidative phosphorylation. Its function is as follows. Cytochrome c oxidase is the component of the respiratory chain that catalyzes the reduction of oxygen to water. Subunits 1-3 form the functional core of the enzyme complex. Co I is the catalytic subunit of the enzyme. Electrons originating in cytochrome c are transferred via the copper A center of subunit 2 and heme a of subunit 1 to the bimetallic center formed by heme a3 and copper B. This cytochrome c oxidase shows proton pump activity across the membrane in addition to the electron transfer. The polypeptide is Cytochrome c oxidase subunit 1 (ctaD) (Cereibacter sphaeroides (Rhodobacter sphaeroides)).